The chain runs to 593 residues: Kelch-like protein 2 (593 aa).

The disordered stretch occupies residues 1 to 29; that stretch reads MESPPLPPACTKQGHQKPLDSKDENPEKH. Positions 17–29 are enriched in basic and acidic residues; that stretch reads KPLDSKDENPEKH. In terms of domain architecture, BTB spans 56-123; sequence CDVTIVAEDM…VYTAEIQVTE (68 aa). Kelch repeat units follow at residues 308–353, 354–400, 402–447, 449–496, 497–543, and 545–591; these read LMVV…YMAG, LVFA…VLNG, LYAV…VVGG, LYAV…VLNN, LLYA…AVNG, and LYVV…VIDK.

In terms of assembly, component of the BCR(KLHL2) E3 ubiquitin ligase complex, at least composed of CUL3 and KLHL2 and RBX1. Binds actin. Interacts with KLHL12. Interacts (via N-terminus) with FYN (via SH3 domain). Detected in brain neurons, oligodendrocytes and astrocytes (at protein level).

The protein localises to the cytoplasm. The protein resides in the cytoskeleton. It is found in the cell projection. It localises to the ruffle. Its subcellular location is the lamellipodium. The protein localises to the cytosol. Its pathway is protein modification; protein ubiquitination. In terms of biological role, substrate-specific adapter of a BCR (BTB-CUL3-RBX1) E3 ubiquitin ligase complex that mediates the ubiquitination of target proteins, such as NPTXR, WNK1, WNK3 and WNK4, leading most often to their proteasomal degradation. The BCR(KLHL2) complex catalyzes ubiquitination and degradation of NPTXR. Responsible for degradative ubiquitination of the WNK kinases WNK1, WNK3 and WNK4. Plays a role in the reorganization of the actin cytoskeleton. Promotes growth of cell projections in oligodendrocyte precursors. The sequence is that of Kelch-like protein 2 from Rattus norvegicus (Rat).